Reading from the N-terminus, the 314-residue chain is uncharacterized protein (314 aa).

The N-terminal 29 residues, 1-29, are a transit peptide targeting the mitochondrion; that stretch reads MMRLIRTLPLRCFKTRIRRQGSLLCLRCF. A disordered region spans residues 52–74; it reads SSSPLSKNKEKQEKPEKENEGKH. The span at 58-74 shows a compositional bias: basic and acidic residues; that stretch reads KNKEKQEKPEKENEGKH. The stretch at 177–207 forms a coiled coil; that stretch reads LNEHHLQLLKLKRELNSIHDELNEIIIDLLQ. Residues 262–279 form a helical membrane-spanning segment; the sequence is GLLVILVLVCSIMIGVSA. Residues 281 to 314 are disordered; the sequence is KKERPGLQEPEEPEILAPKEDIDTTFPQDQHDID.

The protein resides in the mitochondrion membrane. This is an uncharacterized protein from Saccharomyces cerevisiae (strain ATCC 204508 / S288c) (Baker's yeast).